The following is a 563-amino-acid chain: Delta-1-pyrroline-5-carboxylate dehydrogenase, mitochondrial (563 aa).

A mitochondrion-targeting transit peptide spans 1 to 24 (MLLPAPALRRALLSRPWTGAGLRW). N6-succinyllysine is present on Lys31. Ser44 carries the post-translational modification Phosphoserine. At Lys52 the chain carries N6-acetyllysine. Lys93, Lys99, Lys114, Lys130, and Lys175 each carry N6-acetyllysine; alternate. Residues Lys93, Lys99, Lys114, Lys130, and Lys175 each carry the N6-succinyllysine; alternate modification. Residues Ser208, Lys233, and 286–290 (GSVPT) each bind NAD(+). The active-site Proton acceptor is the Glu314. Lys318 carries the post-translational modification N6-acetyllysine. N6-succinyllysine is present on Lys347. Residue Cys348 is the Nucleophile of the active site. N6-acetyllysine occurs at positions 365 and 376. At Lys395 the chain carries N6-succinyllysine. Glu447 serves as a coordination point for NAD(+). Lys462 carries the post-translational modification N6-acetyllysine. Lys509 bears the N6-acetyllysine; alternate mark. Lys509 bears the N6-succinyllysine; alternate mark. Residue Ser513 coordinates substrate. N6-acetyllysine occurs at positions 531 and 552.

The protein belongs to the aldehyde dehydrogenase family. In terms of assembly, homodimer. As to expression, highest expression is found in liver followed by skeletal muscle, kidney, heart, brain, placenta, lung and pancreas.

The protein resides in the mitochondrion matrix. The catalysed reaction is L-glutamate 5-semialdehyde + NAD(+) + H2O = L-glutamate + NADH + 2 H(+). It participates in amino-acid degradation; L-proline degradation into L-glutamate; L-glutamate from L-proline: step 2/2. Its function is as follows. Irreversible conversion of delta-1-pyrroline-5-carboxylate (P5C), derived either from proline or ornithine, to glutamate. This is a necessary step in the pathway interconnecting the urea and tricarboxylic acid cycles. The preferred substrate is glutamic gamma-semialdehyde, other substrates include succinic, glutaric and adipic semialdehydes. The chain is Delta-1-pyrroline-5-carboxylate dehydrogenase, mitochondrial (ALDH4A1) from Homo sapiens (Human).